The sequence spans 295 residues: Protoheme IX farnesyltransferase (295 aa).

The next 9 membrane-spanning stretches (helical) occupy residues 8-28 (VTKP…FLLA), 35-55 (YPLF…GCVF), 74-94 (VLVK…LLGI), 106-125 (PLAM…VYSL), 132-152 (VYGT…GYCA), 162-182 (LILL…IAIF), 208-228 (ITLY…GGYA), 233-253 (LVVA…GYKA), and 264-284 (FVFS…DFMV).

This sequence belongs to the UbiA prenyltransferase family. Protoheme IX farnesyltransferase subfamily.

The protein localises to the cell inner membrane. The enzyme catalyses heme b + (2E,6E)-farnesyl diphosphate + H2O = Fe(II)-heme o + diphosphate. Its pathway is porphyrin-containing compound metabolism; heme O biosynthesis; heme O from protoheme: step 1/1. In terms of biological role, converts heme B (protoheme IX) to heme O by substitution of the vinyl group on carbon 2 of heme B porphyrin ring with a hydroxyethyl farnesyl side group. The chain is Protoheme IX farnesyltransferase from Cronobacter sakazakii (strain ATCC BAA-894) (Enterobacter sakazakii).